Consider the following 145-residue polypeptide: Large ribosomal subunit protein uL16 (145 aa).

This sequence belongs to the universal ribosomal protein uL16 family. Part of the 50S ribosomal subunit.

Functionally, binds 23S rRNA and is also seen to make contacts with the A and possibly P site tRNAs. In Lachnospira eligens (strain ATCC 27750 / DSM 3376 / VPI C15-48 / C15-B4) (Eubacterium eligens), this protein is Large ribosomal subunit protein uL16.